The chain runs to 253 residues: Toxin PezT (253 aa).

ATP is bound at residue 39 to 46 (GQSGAGKT). Asp-66 (proton acceptor) is an active-site residue.

Belongs to the zeta toxin family. Forms a PezA(2)PezT(2) heterotetramer. The heterotetramer is much more stable than either of the proteins alone, and a specific mechanism may be necessary to liberate the toxin.

The catalysed reaction is UDP-N-acetyl-alpha-D-glucosamine + ATP = UDP-N-acetyl-alpha-D-glucosamine 3'-phosphate + ADP + H(+). Functionally, toxic component of a type II toxin-antitoxin (TA) system. Phosphorylates UDP-N-acetyl-D-glucosamine (UNAG) on the 3'-hydroxyl group of the N-acetyl-D-glucosamine moiety, yielding UNAG-3P. UNAG-3P inhibits MurA, the first committed step in cell wall synthesis, which is then blocked. Upon expression in E.coli results in decreased cell growth and viability, followed 3 hours later by growth restoration; the toxic effect and phosphorylation of UNAG are neutralized by coexpression with cognate antitoxin PezA. A mutant lacking the last 11 residues is stably maintained in E.coli, unlike the wild-type which undergoes spontaneous mutation. Expression of the deletion mutant in rapidly growing liquid cultures leads to cell bulging, permeabilization and massive lysis by 1 hour. Cells that survive are not able to undergo cytokinesis. Expression in slowly growing cells leads to bulging but not lysis. Its function is as follows. Acts as a corepressor of its own operon with PezA; it is not clear if it binds DNA alone. This Streptococcus pneumoniae serotype 4 (strain ATCC BAA-334 / TIGR4) protein is Toxin PezT (pezT).